The primary structure comprises 141 residues: Hemoglobin subunit alpha-1/2 (141 aa).

Positions 1–141 (VLSPADKTNV…VSTVLTSKYR (141 aa)) constitute a Globin domain. Residue Ser3 is modified to Phosphoserine. At Lys7 the chain carries N6-succinyllysine. Thr8 bears the Phosphothreonine mark. N6-succinyllysine is present on Lys11. Lys16 is modified (N6-acetyllysine; alternate). Lys16 is subject to N6-succinyllysine; alternate. Tyr24 bears the Phosphotyrosine mark. Ser35 is subject to Phosphoserine. An N6-succinyllysine modification is found at Lys40. Ser49 is modified (phosphoserine). Residue His58 coordinates O2. His87 provides a ligand contact to heme b. Residue Ser102 is modified to Phosphoserine. Thr108 is modified (phosphothreonine). The residue at position 124 (Ser124) is a Phosphoserine. Thr134 and Thr137 each carry phosphothreonine. Ser138 carries the phosphoserine modification.

The protein belongs to the globin family. As to quaternary structure, heterotetramer of two alpha chains and two beta chains. As to expression, red blood cells.

Functionally, involved in oxygen transport from the lung to the various peripheral tissues. This is Hemoglobin subunit alpha-1/2 from Mustela putorius (European polecat).